Consider the following 244-residue polypeptide: MRVSENFALRVHVDEVDPLRMALAAERLDYEIAVLCLELEAERLNIDDLRWLIEEIRDIREHVESVLVLPGCKLEAESAGALRRAIRRTRPLVYLLAVGGGDPKINRAAVSDTRVDLLSHPERGNPHAGLGKYEIELAREKWTYVEIDLSRLFRREGERLAWQVSRIRDLLRLRRRKRFPTTVALGARDPLELIRPKQVEDLLKLMGFEDSEVKEMCVEAPREILRWNAACKHVFTVPGVVSLG.

It belongs to the eukaryotic/archaeal RNase P protein component 3 family. Consists of a catalytic RNA component and at least 4-5 protein subunits.

It is found in the cytoplasm. The catalysed reaction is Endonucleolytic cleavage of RNA, removing 5'-extranucleotides from tRNA precursor.. In terms of biological role, part of ribonuclease P, a protein complex that generates mature tRNA molecules by cleaving their 5'-ends. This is Ribonuclease P protein component 3 from Methanopyrus kandleri (strain AV19 / DSM 6324 / JCM 9639 / NBRC 100938).